A 292-amino-acid polypeptide reads, in one-letter code: Syntaxin-19 (292 aa).

The segment covering 1–24 (MKDRLPELKQRTKETELSKDKDVP) has biased composition (basic and acidic residues). Positions 1–28 (MKDRLPELKQRTKETELSKDKDVPTTEA) are disordered. Residues 46–122 (VAERHLHEIQ…VKEVKKSEDE (77 aa)) are a coiled coil. The t-SNARE coiled-coil homology domain maps to 209-271 (LSEIEQRHKE…NTTKEKFGLA (63 aa)).

Belongs to the syntaxin family. As to quaternary structure, interacts with EGFR.

The protein localises to the cell membrane. It localises to the cytoplasm. Functionally, plays a role in endosomal trafficking of the epidermal growth factor receptor (EGFR). This chain is Syntaxin-19 (STX19), found in Bos taurus (Bovine).